A 503-amino-acid polypeptide reads, in one-letter code: ATP synthase subunit alpha (503 aa).

169 to 176 (GDRQTGKT) provides a ligand contact to ATP.

Belongs to the ATPase alpha/beta chains family. F-type ATPases have 2 components, CF(1) - the catalytic core - and CF(0) - the membrane proton channel. CF(1) has five subunits: alpha(3), beta(3), gamma(1), delta(1), epsilon(1). CF(0) has three main subunits: a(1), b(2) and c(9-12). The alpha and beta chains form an alternating ring which encloses part of the gamma chain. CF(1) is attached to CF(0) by a central stalk formed by the gamma and epsilon chains, while a peripheral stalk is formed by the delta and b chains.

The protein localises to the cell membrane. The enzyme catalyses ATP + H2O + 4 H(+)(in) = ADP + phosphate + 5 H(+)(out). Its function is as follows. Produces ATP from ADP in the presence of a proton gradient across the membrane. The alpha chain is a regulatory subunit. This chain is ATP synthase subunit alpha, found in Staphylococcus epidermidis (strain ATCC 35984 / DSM 28319 / BCRC 17069 / CCUG 31568 / BM 3577 / RP62A).